A 268-amino-acid polypeptide reads, in one-letter code: tRNA threonylcarbamoyladenosine dehydratase (268 aa).

Residues 237-257 (GFGAATMVTATFGFVAVSHAL) form a helical membrane-spanning segment.

The protein belongs to the HesA/MoeB/ThiF family. As to quaternary structure, interacts with CsdE.

Its subcellular location is the membrane. Catalyzes the ATP-dependent dehydration of threonylcarbamoyladenosine at position 37 (t(6)A37) to form cyclic t(6)A37 (ct(6)A37) in tRNAs that read codons beginning with adenine. TcdA is also part of a sulfur transfer pathway; is able to accept sulfur from CsdA directly in vitro, but CsdE might act as the sulfur donor in vivo. The protein is tRNA threonylcarbamoyladenosine dehydratase (tcdA) of Escherichia coli (strain K12).